A 95-amino-acid chain; its full sequence is Glutamyl-tRNA(Gln) amidotransferase subunit C (95 aa).

The protein belongs to the GatC family. Heterotrimer of A, B and C subunits.

The catalysed reaction is L-glutamyl-tRNA(Gln) + L-glutamine + ATP + H2O = L-glutaminyl-tRNA(Gln) + L-glutamate + ADP + phosphate + H(+). It catalyses the reaction L-aspartyl-tRNA(Asn) + L-glutamine + ATP + H2O = L-asparaginyl-tRNA(Asn) + L-glutamate + ADP + phosphate + 2 H(+). In terms of biological role, allows the formation of correctly charged Asn-tRNA(Asn) or Gln-tRNA(Gln) through the transamidation of misacylated Asp-tRNA(Asn) or Glu-tRNA(Gln) in organisms which lack either or both of asparaginyl-tRNA or glutaminyl-tRNA synthetases. The reaction takes place in the presence of glutamine and ATP through an activated phospho-Asp-tRNA(Asn) or phospho-Glu-tRNA(Gln). This Caulobacter vibrioides (strain ATCC 19089 / CIP 103742 / CB 15) (Caulobacter crescentus) protein is Glutamyl-tRNA(Gln) amidotransferase subunit C.